A 512-amino-acid chain; its full sequence is UDP-N-acetylmuramate--L-alanine ligase (512 aa).

132 to 138 (GAHGKTT) serves as a coordination point for ATP.

This sequence belongs to the MurCDEF family.

It localises to the cytoplasm. The catalysed reaction is UDP-N-acetyl-alpha-D-muramate + L-alanine + ATP = UDP-N-acetyl-alpha-D-muramoyl-L-alanine + ADP + phosphate + H(+). Its pathway is cell wall biogenesis; peptidoglycan biosynthesis. Cell wall formation. The polypeptide is UDP-N-acetylmuramate--L-alanine ligase (Bifidobacterium longum (strain NCC 2705)).